The sequence spans 187 residues: Elongation factor P (187 aa).

The protein belongs to the elongation factor P family.

Its subcellular location is the cytoplasm. It participates in protein biosynthesis; polypeptide chain elongation. Involved in peptide bond synthesis. Stimulates efficient translation and peptide-bond synthesis on native or reconstituted 70S ribosomes in vitro. Probably functions indirectly by altering the affinity of the ribosome for aminoacyl-tRNA, thus increasing their reactivity as acceptors for peptidyl transferase. This chain is Elongation factor P, found in Corynebacterium kroppenstedtii (strain DSM 44385 / JCM 11950 / CIP 105744 / CCUG 35717).